The primary structure comprises 394 residues: Endothelial cell-selective adhesion molecule (394 aa).

Residues Met1–Ala29 form the signal peptide. At Gln30 to Ala251 the chain is on the extracellular side. The Ig-like V-type domain occupies Pro37–Lys146. N-linked (GlcNAc...) asparagine glycans are attached at residues Asn111, Asn172, Asn216, and Asn239. Positions Pro156–Asp243 constitute an Ig-like C2-type domain. A disulfide bond links Cys177 and Cys227. The helical transmembrane segment at Val252–Leu272 threads the bilayer. At Leu273 to Val394 the chain is on the cytoplasmic side. Residues Trp300–Ser372 are disordered. Polar residues-rich tracts occupy residues Gly303–Ser318 and Phe335–Ser347. Ser304 carries the phosphoserine modification. Thr336 and Thr338 each carry phosphothreonine. Phosphoserine occurs at positions 340, 343, and 348.

Interacts with MAGI1.

It is found in the cell junction. It localises to the adherens junction. Its subcellular location is the tight junction. The protein localises to the cell membrane. Its function is as follows. Can mediate aggregation most likely through a homophilic molecular interaction. The protein is Endothelial cell-selective adhesion molecule (Esam) of Rattus norvegicus (Rat).